The following is a 199-amino-acid chain: MRPLRCGERTQGIPLGLLAFWVTAARCLQSQGVSLYIPQSAINATVQQDILLSVDYICHGVPTIEWKYTPNWGVQRIVEWKPGTPANVSQSHRDRVCTFDNGSIQLFNVSVKDSGYYIVTVTEHPGSSQSGTILLRVSEIRYEDLHFVAVFFALLAAVAVVLISLMWVCNQCAYKFQRKRRYKLKESTTEEIEMKEVEC.

Positions 1–27 are cleaved as a signal peptide; the sequence is MRPLRCGERTQGIPLGLLAFWVTAARC. At 28–146 the chain is on the extracellular side; sequence LQSQGVSLYI…VSEIRYEDLH (119 aa). The region spanning 35–138 is the Ig-like C2-type domain; that stretch reads LYIPQSAINA…QSGTILLRVS (104 aa). N-linked (GlcNAc...) asparagine glycosylation is found at Asn43, Asn87, and Asn101. The helical transmembrane segment at 147 to 167 threads the bilayer; the sequence is FVAVFFALLAAVAVVLISLMW. The Cytoplasmic portion of the chain corresponds to 168–199; that stretch reads VCNQCAYKFQRKRRYKLKESTTEEIEMKEVEC. The segment at 169-185 is important for CDC42-dependent filopodia induction; the sequence is CNQCAYKFQRKRRYKLK.

Can homooligomerize through cis interactions within the same cell membrane. N-glycosylated. As to expression, highly expressed in the central nervous system (CNS), with the highest expression in thalamus, hippocampus, cerebrum, midbrain and spinal cord. Also highly expressed in stomach, kidney and small intestine.

It is found in the cell membrane. The protein resides in the cell projection. Its subcellular location is the dendrite. It localises to the axon. In terms of biological role, cell adhesion-like membrane protein of the central nervous system (CNS) which modulates both the position and complexity of central neurons by altering their membrane morphology and dynamics. Involved in the formation of neuronal dendrites and protrusions including dendritic filopodia. In synaptogenesis, regulates synapse formation by altering dendritic spine morphology and actin distribution. Promotes formation of unstable neuronal spines such as thin and branched types. Regulates neuronal morphogenesis and migration during cortical development in the brain. The polypeptide is V-set and transmembrane domain-containing protein 5 (Mus musculus (Mouse)).